Reading from the N-terminus, the 911-residue chain is Golgin IMH1 (911 aa).

2 disordered regions span residues 16–41 (LAKG…SGLP) and 271–314 (KELP…ETVD). Residues 101 to 280 (FFQDLNNKNN…KELPKAISHQ (180 aa)) are a coiled coil. A compositionally biased stretch (basic residues) spans 286–299 (NRRKKNRNKGKKNK). 2 positions are modified to phosphoserine: Ser308 and Ser660. Coiled-coil stretches lie at residues 312-735 (TVDN…ALKH) and 766-814 (SKAD…KERQ). The segment at 814-850 (QYSDKSGRVSRSGSIGTLANANIDSSPANNSNPTKLE) is disordered. Over residues 822–847 (VSRSGSIGTLANANIDSSPANNSNPT) the composition is skewed to polar residues. At Ser827 the chain carries Phosphoserine. A Phosphothreonine modification is found at Thr830. The GRIP domain maps to 861–909 (DSEKNEKIAYIKNVLLGFLEHKEQRNQLLPVISMLLQLDSTDEKRLVMS).

As to quaternary structure, forms oligomers and is present in high-molecular-mass complexes. Interacts with ARL1.

The protein resides in the cytoplasm. It localises to the golgi apparatus membrane. In terms of biological role, involved in vesicular transport between an endosomal compartment and the Golgi apparatus. This Saccharomyces cerevisiae (strain ATCC 204508 / S288c) (Baker's yeast) protein is Golgin IMH1 (IMH1).